The sequence spans 363 residues: Alanine racemase (363 aa).

Residue K39 is the Proton acceptor; specific for D-alanine of the active site. K39 is modified (N6-(pyridoxal phosphate)lysine). R134 is a substrate binding site. Y251 serves as the catalytic Proton acceptor; specific for L-alanine. M299 is a binding site for substrate.

It belongs to the alanine racemase family. It depends on pyridoxal 5'-phosphate as a cofactor.

It carries out the reaction L-alanine = D-alanine. Its pathway is amino-acid biosynthesis; D-alanine biosynthesis; D-alanine from L-alanine: step 1/1. Functionally, catalyzes the interconversion of L-alanine and D-alanine. May also act on other amino acids. This chain is Alanine racemase (alr), found in Thermodesulfovibrio yellowstonii (strain ATCC 51303 / DSM 11347 / YP87).